Reading from the N-terminus, the 136-residue chain is ATP synthase epsilon chain (136 aa).

This sequence belongs to the ATPase epsilon chain family. F-type ATPases have 2 components, CF(1) - the catalytic core - and CF(0) - the membrane proton channel. CF(1) has five subunits: alpha(3), beta(3), gamma(1), delta(1), epsilon(1). CF(0) has three main subunits: a, b and c.

It localises to the cellular thylakoid membrane. Produces ATP from ADP in the presence of a proton gradient across the membrane. In Parasynechococcus marenigrum (strain WH8102), this protein is ATP synthase epsilon chain.